Reading from the N-terminus, the 503-residue chain is AMP phosphorylase (503 aa).

Residues G168, 194-199, and T203 contribute to the AMP site; that span reads SRAITS. D256 acts as the Proton donor in catalysis. 2 residues coordinate AMP: S264 and K288.

This sequence belongs to the thymidine/pyrimidine-nucleoside phosphorylase family. Type 2 subfamily.

The catalysed reaction is AMP + phosphate = alpha-D-ribose 1,5-bisphosphate + adenine. It carries out the reaction CMP + phosphate = cytosine + alpha-D-ribose 1,5-bisphosphate. The enzyme catalyses UMP + phosphate = alpha-D-ribose 1,5-bisphosphate + uracil. Catalyzes the conversion of AMP and phosphate to adenine and ribose 1,5-bisphosphate (R15P). Exhibits phosphorylase activity toward CMP and UMP in addition to AMP. Functions in an archaeal AMP degradation pathway, together with R15P isomerase and RubisCO. This is AMP phosphorylase from Methanocaldococcus jannaschii (strain ATCC 43067 / DSM 2661 / JAL-1 / JCM 10045 / NBRC 100440) (Methanococcus jannaschii).